The following is a 306-amino-acid chain: Bacitracin transport ATP-binding protein BcrA (306 aa).

In terms of domain architecture, ABC transporter spans 5–233 (IKTTDLTKMY…NRKYLEFQLS (229 aa)). 37–44 (GRNGAGKT) contributes to the ATP binding site.

The protein belongs to the ABC transporter superfamily.

Its function is as follows. Part of the binding-protein-dependent transport system for bacitracin that confer resistance to this antibiotic. Probably responsible for energy coupling to the transport system. The chain is Bacitracin transport ATP-binding protein BcrA (bcrA) from Bacillus licheniformis.